Reading from the N-terminus, the 192-residue chain is Pyridoxal 5'-phosphate synthase subunit PdxT (192 aa).

47 to 49 lines the L-glutamine pocket; sequence GES. Residue Cys78 is the Nucleophile of the active site. L-glutamine-binding positions include Arg105 and 139–140; that span reads IR. Active-site charge relay system residues include His175 and Glu177.

The protein belongs to the glutaminase PdxT/SNO family. In terms of assembly, in the presence of PdxS, forms a dodecamer of heterodimers. Only shows activity in the heterodimer.

It catalyses the reaction aldehydo-D-ribose 5-phosphate + D-glyceraldehyde 3-phosphate + L-glutamine = pyridoxal 5'-phosphate + L-glutamate + phosphate + 3 H2O + H(+). The catalysed reaction is L-glutamine + H2O = L-glutamate + NH4(+). Its pathway is cofactor biosynthesis; pyridoxal 5'-phosphate biosynthesis. Its function is as follows. Catalyzes the hydrolysis of glutamine to glutamate and ammonia as part of the biosynthesis of pyridoxal 5'-phosphate. The resulting ammonia molecule is channeled to the active site of PdxS. The protein is Pyridoxal 5'-phosphate synthase subunit PdxT of Solibacter usitatus (strain Ellin6076).